The sequence spans 140 residues: MGLHAYPKAARLTKTDEFSSVFALRPVRRSRHFVLYVRANGDRPARLGVVIGKKFAKRAVERNLIKRQCRELFRLRQPLLGGRDVLIRLQAKFPRQDVPTVAAFKRICREELAQLFEVATRPLSAPPAATPPQPTAGSTP.

The protein belongs to the RnpA family. As to quaternary structure, consists of a catalytic RNA component (M1 or rnpB) and a protein subunit.

It carries out the reaction Endonucleolytic cleavage of RNA, removing 5'-extranucleotides from tRNA precursor.. Its function is as follows. RNaseP catalyzes the removal of the 5'-leader sequence from pre-tRNA to produce the mature 5'-terminus. It can also cleave other RNA substrates such as 4.5S RNA. The protein component plays an auxiliary but essential role in vivo by binding to the 5'-leader sequence and broadening the substrate specificity of the ribozyme. The polypeptide is Ribonuclease P protein component (Ralstonia pickettii (strain 12J)).